We begin with the raw amino-acid sequence, 31 residues long: Cytochrome b6-f complex subunit 6 (31 aa).

Residues 4–24 traverse the membrane as a helical segment; it reads ITSYFGFLLAALTITSALFIG.

The protein belongs to the PetL family. As to quaternary structure, the 4 large subunits of the cytochrome b6-f complex are cytochrome b6, subunit IV (17 kDa polypeptide, PetD), cytochrome f and the Rieske protein, while the 4 small subunits are PetG, PetL, PetM and PetN. The complex functions as a dimer.

It is found in the plastid. The protein localises to the chloroplast thylakoid membrane. In terms of biological role, component of the cytochrome b6-f complex, which mediates electron transfer between photosystem II (PSII) and photosystem I (PSI), cyclic electron flow around PSI, and state transitions. PetL is important for photoautotrophic growth as well as for electron transfer efficiency and stability of the cytochrome b6-f complex. The sequence is that of Cytochrome b6-f complex subunit 6 from Solanum tuberosum (Potato).